We begin with the raw amino-acid sequence, 1136 residues long: Tyrosine-protein kinase receptor Tie-1 (1136 aa).

An N-terminal signal peptide occupies residues 1–23 (MVWLEPPLLLPIFFLASHVGAAV). Residues 24 to 757 (DLTLLADLRL…IHAAEEGLDQ (734 aa)) lie on the Extracellular side of the membrane. The Ig-like C2-type 1 domain occupies 43-106 (CVSGEAGAGR…PSDLVGVFSC (64 aa)). N-linked (GlcNAc...) asparagine glycans are attached at residues Asn-84 and Asn-159. EGF-like domains lie at 212 to 254 (GCEA…TRCE), 256 to 301 (ACRE…SQCQ), and 303 to 343 (ACAP…MHCE). Cystine bridges form between Cys-226–Cys-235, Cys-229–Cys-242, and Cys-244–Cys-253. Cystine bridges form between Cys-317–Cys-325, Cys-319–Cys-331, and Cys-333–Cys-342. The region spanning 370–424 (CAAAGNPFPVRGSMELRKPDGTVLLSTKAIVEPDRTTAEFEVPRLALGDSGLWEC) is the Ig-like C2-type 2 domain. 3 Fibronectin type-III domains span residues 444-543 (PPVP…CPEP), 546-640 (KPWL…LPPS), and 644-737 (APRH…TLGN). Asn-501, Asn-594, and Asn-707 each carry an N-linked (GlcNAc...) asparagine glycan. Residues 758-782 (QLVLAVVGSVSATCLTILAALLTLA) form a helical membrane-spanning segment. The Cytoplasmic portion of the chain corresponds to 783–1136 (CIRKSCLHRR…AGIDATAEEA (354 aa)). The Protein kinase domain maps to 837 to 1116 (ITFEDLIGEG…RMLEARKAYV (280 aa)). Residues 843–851 (IGEGNFGQV) and Lys-868 contribute to the ATP site. The Proton acceptor role is filled by Asp-977. Residue Tyr-1005 is modified to Phosphotyrosine; by autocatalysis.

This sequence belongs to the protein kinase superfamily. Tyr protein kinase family. Tie subfamily. As to quaternary structure, heterodimer with TEK/TIE2. Interacts with SVEP1 (via C-terminus). Phosphorylated on tyrosine residues in response to ANGPT1, most likely by TEK/TIE2. In terms of tissue distribution, specifically expressed in developing vascular endothelial cells.

The protein resides in the cell membrane. It carries out the reaction L-tyrosyl-[protein] + ATP = O-phospho-L-tyrosyl-[protein] + ADP + H(+). Functionally, transmembrane tyrosine-protein kinase that may modulate TEK/TIE2 activity and contribute to the regulation of angiogenesis. The polypeptide is Tyrosine-protein kinase receptor Tie-1 (TIE1) (Bos taurus (Bovine)).